A 203-amino-acid polypeptide reads, in one-letter code: MALIIGLTGGIGSGKTRAADSFRELGIEIIDTDQIAHELTRSAGKAISPIRIAFGDCFILDDGSLDRSAMRRLVFSDETARHRLESILHPLIYQETLQRLPLIQSEYGIVVVPLLLEIDGYLKLVDRVLVIDCPEPLQISRTMLRSKLSEQEVRDVMAVQCSRDKRLAQADDVIVNDSGEQHLQRQVEELHRKYLMLARKHGL.

The 198-residue stretch at 4-201 (IIGLTGGIGS…RKYLMLARKH (198 aa)) folds into the DPCK domain. Position 12 to 17 (12 to 17 (GSGKTR)) interacts with ATP.

It belongs to the CoaE family.

The protein localises to the cytoplasm. It catalyses the reaction 3'-dephospho-CoA + ATP = ADP + CoA + H(+). It participates in cofactor biosynthesis; coenzyme A biosynthesis; CoA from (R)-pantothenate: step 5/5. In terms of biological role, catalyzes the phosphorylation of the 3'-hydroxyl group of dephosphocoenzyme A to form coenzyme A. The protein is Dephospho-CoA kinase of Nitrosomonas europaea (strain ATCC 19718 / CIP 103999 / KCTC 2705 / NBRC 14298).